A 158-amino-acid chain; its full sequence is Low molecular weight phosphotyrosine protein phosphatase (158 aa).

An N-acetylalanine modification is found at Ala2. The active-site Nucleophile is Cys13. The active site involves Arg19. Asp130 acts as the Proton donor in catalysis. Phosphotyrosine occurs at positions 132 and 133.

This sequence belongs to the low molecular weight phosphotyrosine protein phosphatase family. As to quaternary structure, interacts with EPHA2; dephosphorylates EPHA2. Interacts with EPHB1. Interacts with the SH3 domain of SPTAN1. There is no interaction observed for isoform 2. Phosphorylated by LCK. Phosphorylation at Tyr-132 increases its phosphatase activity.

The protein localises to the cytoplasm. It catalyses the reaction O-phospho-L-tyrosyl-[protein] + H2O = L-tyrosyl-[protein] + phosphate. The enzyme catalyses a phosphate monoester + H2O = an alcohol + phosphate. With respect to regulation, inhibited by sulfhydryl reagents. Its function is as follows. Acts on tyrosine phosphorylated proteins, low-MW aryl phosphates and natural and synthetic acyl phosphates with differences in substrate specificity between isoform 1 and isoform 2. The chain is Low molecular weight phosphotyrosine protein phosphatase from Rattus norvegicus (Rat).